The primary structure comprises 377 residues: Phytanoyl-CoA hydroxylase-interacting protein-like (377 aa).

Residues 52 to 161 enclose the Fibronectin type-III domain; the sequence is VPQNIKISNI…EINEFCTADY (110 aa).

It belongs to the PHYHIP family.

Its function is as follows. May play a role in the development of the central system. The polypeptide is Phytanoyl-CoA hydroxylase-interacting protein-like (phyhipl) (Danio rerio (Zebrafish)).